The following is a 145-amino-acid chain: Lipoprotein signal peptidase (145 aa).

The next 2 helical transmembrane spans lie at 57–77 (LFFIVITVVVGIVLIYSMIKL) and 79–99 (ENSLYNYTLAMILGGAIGNLI). Active-site residues include Asp-109 and Asp-124. Residues 120-140 (FNVADSFIVVGAIILGYLMIF) form a helical membrane-spanning segment.

It belongs to the peptidase A8 family.

It is found in the cell membrane. It catalyses the reaction Release of signal peptides from bacterial membrane prolipoproteins. Hydrolyzes -Xaa-Yaa-Zaa-|-(S,diacylglyceryl)Cys-, in which Xaa is hydrophobic (preferably Leu), and Yaa (Ala or Ser) and Zaa (Gly or Ala) have small, neutral side chains.. It participates in protein modification; lipoprotein biosynthesis (signal peptide cleavage). Its function is as follows. This protein specifically catalyzes the removal of signal peptides from prolipoproteins. In Caldanaerobacter subterraneus subsp. tengcongensis (strain DSM 15242 / JCM 11007 / NBRC 100824 / MB4) (Thermoanaerobacter tengcongensis), this protein is Lipoprotein signal peptidase.